The sequence spans 78 residues: Acyl carrier protein (78 aa).

Positions Met1 to Lys76 constitute a Carrier domain. The residue at position 36 (Ser36) is an O-(pantetheine 4'-phosphoryl)serine.

It belongs to the acyl carrier protein (ACP) family. Post-translationally, 4'-phosphopantetheine is transferred from CoA to a specific serine of apo-ACP by AcpS. This modification is essential for activity because fatty acids are bound in thioester linkage to the sulfhydryl of the prosthetic group.

The protein resides in the cytoplasm. It participates in lipid metabolism; fatty acid biosynthesis. Functionally, carrier of the growing fatty acid chain in fatty acid biosynthesis. In Solidesulfovibrio magneticus (strain ATCC 700980 / DSM 13731 / RS-1) (Desulfovibrio magneticus), this protein is Acyl carrier protein.